The sequence spans 254 residues: Homeobox protein BarH-like 1 (254 aa).

The tract at residues 1–20 (MQRPGEPGAARFGPPEGCAD) is disordered. The homeobox DNA-binding region spans 142-201 (GRRSRTVFTELQLMGLEKRFEKQKYLSTPDRIDLAESLGLSQLQVKTWYQNRRMKWKKIV). Residues 204–254 (GGGLESPTKPKGRPKKNSIPTSEQLTEQERAKDAEKPAEVPGEPSDRSRED) form a disordered region. Positions 230–254 (EQERAKDAEKPAEVPGEPSDRSRED) are enriched in basic and acidic residues.

Belongs to the BAR homeobox family. Widely expressed. Expressed at higher levels in testis and heart. Detected in craniofacial tissue and adult iris, but not in lymphocytes, fibroblasts, choroid retina, retinal pigment epithelium, kidney, or fetal liver.

Its subcellular location is the nucleus. Its function is as follows. Transcription factor, which is involved in craniofacial development, in odontogenesis and in stomach organogenesis. May have a role in the differentiation of molars from incisors. Plays a role in suppressing endodermal Wnt activity. Binds to a regulatory module of the NCAM promoter. The sequence is that of Homeobox protein BarH-like 1 (BARX1) from Homo sapiens (Human).